Reading from the N-terminus, the 58-residue chain is UPF0339 protein TDE_0826 (58 aa).

Belongs to the UPF0339 family.

The chain is UPF0339 protein TDE_0826 from Treponema denticola (strain ATCC 35405 / DSM 14222 / CIP 103919 / JCM 8153 / KCTC 15104).